The following is a 171-amino-acid chain: Transcription antitermination protein NusB (171 aa).

This sequence belongs to the NusB family.

Functionally, involved in transcription antitermination. Required for transcription of ribosomal RNA (rRNA) genes. Binds specifically to the boxA antiterminator sequence of the ribosomal RNA (rrn) operons. This chain is Transcription antitermination protein NusB, found in Brucella suis (strain ATCC 23445 / NCTC 10510).